The sequence spans 403 residues: MQSIKRTLLLLGAILPAVLGAPVQETRRAAEKLPGKYIVTFKPGIDEAKIQEHTTWATNIHQRSLERRGATGGDLPVGIERNYKINKFAAYAGSFDDATIEEIRKNEDVAYVEEDQIYYLDGLTTQKSAPWGLGSISHKGQQSTDYIYDTSAGEGTYAYVVDSGVNVDHEEFEGRASKAYNAAGGQHVDSIGHGTHVSGTIAGKTYGIAKKASILSVKVFQGESSSTSVILDGFNWAANDIVSKKRTSKAAINMSLGGGYSKAFNDAVENAFEQGVLSVVAAGNENSDAGQTSPASAPDAITVAAIQKSNNRASFSNFGKVVDVFAPGQDILSAWIGSSSATNTISGTSMATPHIVGLSLYLAALENLDGPAAVTKRIKELATKDVVKDVKGSPNLLAYNGNA.

The first 21 residues, 1–21, serve as a signal peptide directing secretion; the sequence is MQSIKRTLLLLGAILPAVLGA. Residues 22–125 constitute a propeptide that is removed on maturation; the sequence is PVQETRRAAE…QIYYLDGLTT (104 aa). Residues 36-120 form the Inhibitor I9 domain; it reads KYIVTFKPGI…YVEEDQIYYL (85 aa). Positions 130-403 constitute a Peptidase S8 domain; it reads PWGLGSISHK…PNLLAYNGNA (274 aa). Catalysis depends on charge relay system residues aspartate 162 and histidine 193. N-linked (GlcNAc...) asparagine glycosylation is present at asparagine 253. Serine 349 acts as the Charge relay system in catalysis.

The protein belongs to the peptidase S8 family.

Its subcellular location is the secreted. The enzyme catalyses Hydrolysis of proteins with broad specificity, and of Bz-Arg-OEt &gt; Ac-Tyr-OEt. Does not hydrolyze peptide amides.. Functionally, secreted alkaline protease that allows assimilation of proteinaceous substrates. This chain is Alkaline protease 1 (alp1), found in Aspergillus flavus (strain ATCC 200026 / FGSC A1120 / IAM 13836 / NRRL 3357 / JCM 12722 / SRRC 167).